The primary structure comprises 44 residues: Photosystem I reaction center subunit IX (44 aa).

The helical transmembrane segment at 7–27 (YLSVAPVLSTLWFGALAGLLI) threads the bilayer.

The protein belongs to the PsaJ family.

Its subcellular location is the plastid. The protein resides in the chloroplast thylakoid membrane. Its function is as follows. May help in the organization of the PsaE and PsaF subunits. The protein is Photosystem I reaction center subunit IX of Oryza nivara (Indian wild rice).